We begin with the raw amino-acid sequence, 312 residues long: Ribosomal RNA small subunit methyltransferase H (312 aa).

Residues 36-38 (GGH), D55, F81, D103, and Q110 each bind S-adenosyl-L-methionine.

The protein belongs to the methyltransferase superfamily. RsmH family.

The protein localises to the cytoplasm. It carries out the reaction cytidine(1402) in 16S rRNA + S-adenosyl-L-methionine = N(4)-methylcytidine(1402) in 16S rRNA + S-adenosyl-L-homocysteine + H(+). In terms of biological role, specifically methylates the N4 position of cytidine in position 1402 (C1402) of 16S rRNA. The sequence is that of Ribosomal RNA small subunit methyltransferase H from Marinomonas sp. (strain MWYL1).